Reading from the N-terminus, the 376-residue chain is UDP-N-acetylglucosamine 2-epimerase (376 aa).

Substrate-binding positions include R10, K15, D95, E117, H213, Q271, F276, S290–G292, E296, and R313.

This sequence belongs to the UDP-N-acetylglucosamine 2-epimerase family. As to quaternary structure, homodimer.

It is found in the cytoplasm. It carries out the reaction UDP-N-acetyl-alpha-D-glucosamine = UDP-N-acetyl-alpha-D-mannosamine. It functions in the pathway bacterial outer membrane biogenesis; enterobacterial common antigen biosynthesis. Catalyzes the reversible epimerization at C-2 of UDP-N-acetylglucosamine (UDP-GlcNAc) and thereby provides bacteria with UDP-N-acetylmannosamine (UDP-ManNAc), the activated donor of ManNAc residues. The sequence is that of UDP-N-acetylglucosamine 2-epimerase from Salmonella typhimurium (strain LT2 / SGSC1412 / ATCC 700720).